A 75-amino-acid polypeptide reads, in one-letter code: UPF0352 protein YejL (75 aa).

The protein belongs to the UPF0352 family.

This is UPF0352 protein YejL from Salmonella agona (strain SL483).